The following is a 1082-amino-acid chain: Mediator of RNA polymerase II transcription subunit 14 (1082 aa).

Disordered stretches follow at residues 1 to 80 (MTTT…APPP) and 319 to 343 (EATS…NLPL). T2 carries the post-translational modification N-acetylthreonine. Residue S7 is modified to Phosphoserine. Residues 13–28 (NEERLSNEMHALKNRS) show a composition bias toward basic and acidic residues. Residues 29–59 (EQNGQEQQGPVKNTQLHGPSATDPETTATQK) are compositionally biased toward polar residues. Residues 321 to 340 (TSTNGDSENNEENSSSNGNN) are compositionally biased toward low complexity. Position 1036 is a phosphothreonine (T1036).

It belongs to the Mediator complex subunit 14 family. Component of the Mediator complex, which is composed of at least 21 subunits that form three structurally distinct submodules. The Mediator head module contains MED6, MED8, MED11, SRB4/MED17, SRB5/MED18, ROX3/MED19, SRB2/MED20 and SRB6/MED22, the middle module contains MED1, MED4, NUT1/MED5, MED7, CSE2/MED9, NUT2/MED10, SRB7/MED21 and SOH1/MED31, and the tail module contains MED2, PGD1/MED3, RGR1/MED14, GAL11/MED15 and SIN4/MED16. The head and the middle modules interact directly with RNA polymerase II, whereas the elongated tail module interacts with gene-specific regulatory proteins.

The protein resides in the nucleus. Component of the Mediator complex, a coactivator involved in the regulated transcription of nearly all RNA polymerase II-dependent genes. Mediator functions as a bridge to convey information from gene-specific regulatory proteins to the basal RNA polymerase II transcription machinery. The Mediator complex, having a compact conformation in its free form, is recruited to promoters by direct interactions with regulatory proteins and serves for the assembly of a functional preinitiation complex with RNA polymerase II and the general transcription factors. The Mediator complex unfolds to an extended conformation and partially surrounds RNA polymerase II, specifically interacting with the unphosphorylated form of the C-terminal domain (CTD) of RNA polymerase II. The Mediator complex dissociates from the RNA polymerase II holoenzyme and stays at the promoter when transcriptional elongation begins. The chain is Mediator of RNA polymerase II transcription subunit 14 (RGR1) from Saccharomyces cerevisiae (strain ATCC 204508 / S288c) (Baker's yeast).